Here is a 491-residue protein sequence, read N- to C-terminus: MHTKTLTELKAGLAAGDFSSRELTEHFLARIKQYDGELNSFVTVTEEQALAQADAADATLATNRASSSVSGLLTGLPIAHKDIFCTEGVRTSCGSKMLDNFIAPYTATVVEKMAAEGAVMLGKTNMDEFAMGSSNETSYYGPVKNPWDLERVPGGSSGGAAACLGARLAPAATGTDTGGSIRQPAALNNITGLKPTYGRVSRWGMIAFASSLDQAGPMAQSAEDCALMLQAMAGHDHRDSTSLNEKVGDYLGALKDDIRGLTIGIPEEFFPDTLDGAIADNSRDAIRELEKLGAKVVSVSLPSIKLSVPAYYVIAPAEASANLSRFDGVRFGHRCDDPQDLEDLYKRSRSEGFGDEVKRRILVGAYALSAGYYDAYYRRAQQVRSLIRDDFARAFEKVDVLMGPTAPETAFKLGAKKDDPVSMYMADVFTIGVNLAGLPALSMPTGFINGLPTGTQIIGNYFREGQILNVAHKYQQATDWHKQAPAFGGAQ.

Residues K81 and S156 each act as charge relay system in the active site. The active-site Acyl-ester intermediate is S180.

Belongs to the amidase family. GatA subfamily. Heterotrimer of A, B and C subunits.

It carries out the reaction L-glutamyl-tRNA(Gln) + L-glutamine + ATP + H2O = L-glutaminyl-tRNA(Gln) + L-glutamate + ADP + phosphate + H(+). Allows the formation of correctly charged Gln-tRNA(Gln) through the transamidation of misacylated Glu-tRNA(Gln) in organisms which lack glutaminyl-tRNA synthetase. The reaction takes place in the presence of glutamine and ATP through an activated gamma-phospho-Glu-tRNA(Gln). The polypeptide is Glutamyl-tRNA(Gln) amidotransferase subunit A (Alcanivorax borkumensis (strain ATCC 700651 / DSM 11573 / NCIMB 13689 / SK2)).